A 148-amino-acid chain; its full sequence is Hemoglobin subunit beta-A (148 aa).

A Globin domain is found at 3-148 (DWTDAERAAI…VVSALGRQYH (146 aa)). 2 residues coordinate heme b: H64 and H93.

Belongs to the globin family. As to quaternary structure, heterotetramer of two alpha chains and two beta chains. As to expression, red blood cells.

In terms of biological role, involved in oxygen transport from gills to the various peripheral tissues. This Seriola quinqueradiata (Five-ray yellowtail) protein is Hemoglobin subunit beta-A (hbb1).